Consider the following 259-residue polypeptide: Cytosolic Fe-S cluster assembly factor Nubp2 homolog (259 aa).

Position 14–21 (14–21 (GKGGVGKS)) interacts with ATP. Cys188 and Cys191 together coordinate [4Fe-4S] cluster.

Belongs to the Mrp/NBP35 ATP-binding proteins family. NUBP2/CFD1 subfamily. Heterotetramer of 2 Nubp1 and 2 Nubp2 chains. Requires [4Fe-4S] cluster as cofactor.

It is found in the cytoplasm. Component of the cytosolic iron-sulfur (Fe/S) protein assembly (CIA) machinery. Required for maturation of extramitochondrial Fe-S proteins. The Nubp1-Nubp2 heterotetramer forms a Fe-S scaffold complex, mediating the de novo assembly of an Fe-S cluster and its transfer to target apoproteins. The polypeptide is Cytosolic Fe-S cluster assembly factor Nubp2 homolog (Anopheles gambiae (African malaria mosquito)).